A 90-amino-acid chain; its full sequence is Small regulatory polypeptide of amino acid response (90 aa).

The Lumenal portion of the chain corresponds to 1 to 18; sequence MGAKAPRGPKVAQWAMET. Residues 19-39 form a helical membrane-spanning segment; sequence AVIGVVVVLFVVTVAITCVLC. The Cytoplasmic segment spans residues 40 to 90; the sequence is CFSCDSRAQDPQGGPGRSFTVATFRQEASLFTGPVRHAQPVPSAQDFWTFM.

Interacts with components of the lysosomal V-ATPase complex. Interacts with ATP6V0A1. Interacts with ATP6V0A2. In terms of tissue distribution, highly expressed in lung, heart and skeletal muscle.

Its subcellular location is the late endosome membrane. It localises to the lysosome membrane. In terms of biological role, negative regulator of amino acid sensing and mTORC1, a signaling complex promoting cell growth in response to growth factors, energy levels and amino acids. Negatively regulates mTORC1 activation by inhibiting recruitment of mTORC1 to lysosomes upon stimulation with amino acids: acts by promoting the formation of a tightly bound supercomplex composed of the lysosomal V-ATPase, Ragulator and Rag GTPases, preventing recruitment of mTORC1. Acts as a regulator of muscle regeneration following injury by regulating mTORC1 activation. In Homo sapiens (Human), this protein is Small regulatory polypeptide of amino acid response.